Reading from the N-terminus, the 202-residue chain is Na(+)-translocating NADH-quinone reductase subunit E (202 aa).

6 helical membrane-spanning segments follow: residues 4 to 24 (LAGL…FFLG), 35 to 55 (IEVA…TVPI), 81 to 101 (FLGL…LEMF), 114 to 134 (GIYL…LFMV), 144 to 164 (LVYG…LAGV), and 180 to 200 (LGIT…FSGI).

The protein belongs to the NqrDE/RnfAE family. Composed of six subunits; NqrA, NqrB, NqrC, NqrD, NqrE and NqrF.

The protein resides in the cell inner membrane. The catalysed reaction is a ubiquinone + n Na(+)(in) + NADH + H(+) = a ubiquinol + n Na(+)(out) + NAD(+). Its function is as follows. NQR complex catalyzes the reduction of ubiquinone-1 to ubiquinol by two successive reactions, coupled with the transport of Na(+) ions from the cytoplasm to the periplasm. NqrA to NqrE are probably involved in the second step, the conversion of ubisemiquinone to ubiquinol. The sequence is that of Na(+)-translocating NADH-quinone reductase subunit E from Nitrosomonas europaea (strain ATCC 19718 / CIP 103999 / KCTC 2705 / NBRC 14298).